The sequence spans 100 residues: Integration host factor subunit alpha (100 aa).

It belongs to the bacterial histone-like protein family. As to quaternary structure, heterodimer of an alpha and a beta chain.

Its function is as follows. This protein is one of the two subunits of integration host factor, a specific DNA-binding protein that functions in genetic recombination as well as in transcriptional and translational control. The sequence is that of Integration host factor subunit alpha from Ruegeria sp. (strain TM1040) (Silicibacter sp.).